The sequence spans 29 residues: Dander allergen Equ c 2.0101 (29 aa).

It belongs to the calycin superfamily. Lipocalin family.

It localises to the secreted. The protein is Dander allergen Equ c 2.0101 of Equus caballus (Horse).